We begin with the raw amino-acid sequence, 130 residues long: Large ribosomal subunit protein bL12 (130 aa).

Belongs to the bacterial ribosomal protein bL12 family. As to quaternary structure, homodimer. Part of the ribosomal stalk of the 50S ribosomal subunit. Forms a multimeric L10(L12)X complex, where L10 forms an elongated spine to which 2 to 4 L12 dimers bind in a sequential fashion. Binds GTP-bound translation factors.

Forms part of the ribosomal stalk which helps the ribosome interact with GTP-bound translation factors. Is thus essential for accurate translation. The polypeptide is Large ribosomal subunit protein bL12 (Herpetosiphon aurantiacus (strain ATCC 23779 / DSM 785 / 114-95)).